The primary structure comprises 180 residues: uncharacterized protein (180 aa).

The protein belongs to the CdaR family.

This is an uncharacterized protein from Thermomonospora curvata.